The primary structure comprises 209 residues: Uracil phosphoribosyltransferase (209 aa).

Residues R79, R104, and 131 to 139 (DPMLATGGS) each bind 5-phospho-alpha-D-ribose 1-diphosphate. Uracil contacts are provided by residues I194 and 199 to 201 (GDA). D200 serves as a coordination point for 5-phospho-alpha-D-ribose 1-diphosphate.

Belongs to the UPRTase family. Mg(2+) is required as a cofactor.

The enzyme catalyses UMP + diphosphate = 5-phospho-alpha-D-ribose 1-diphosphate + uracil. It functions in the pathway pyrimidine metabolism; UMP biosynthesis via salvage pathway; UMP from uracil: step 1/1. Its activity is regulated as follows. Allosterically activated by GTP. Its function is as follows. Catalyzes the conversion of uracil and 5-phospho-alpha-D-ribose 1-diphosphate (PRPP) to UMP and diphosphate. This chain is Uracil phosphoribosyltransferase, found in Streptococcus salivarius.